A 214-amino-acid chain; its full sequence is Large ribosomal subunit protein uL3 (214 aa).

The disordered stretch occupies residues 131–155 (GAQRTSHGNSRSHRVPGSIGMAQDP). Position 153 is an N5-methylglutamine (Q153).

This sequence belongs to the universal ribosomal protein uL3 family. Part of the 50S ribosomal subunit. Forms a cluster with proteins L14 and L19. Post-translationally, methylated by PrmB.

Functionally, one of the primary rRNA binding proteins, it binds directly near the 3'-end of the 23S rRNA, where it nucleates assembly of the 50S subunit. This chain is Large ribosomal subunit protein uL3, found in Neisseria gonorrhoeae (strain ATCC 700825 / FA 1090).